Here is a 273-residue protein sequence, read N- to C-terminus: Dermonecrotic toxin LdSicTox-alphaIB3av (273 aa).

His-5 is a catalytic residue. Glu-25 and Asp-27 together coordinate Mg(2+). Residue His-41 is the Nucleophile of the active site. Disulfide bonds link Cys-45–Cys-51 and Cys-47–Cys-190. Asp-85 contacts Mg(2+).

The protein belongs to the arthropod phospholipase D family. Class II subfamily. The cofactor is Mg(2+). As to expression, expressed by the venom gland.

The protein resides in the secreted. The catalysed reaction is an N-(acyl)-sphingosylphosphocholine = an N-(acyl)-sphingosyl-1,3-cyclic phosphate + choline. It catalyses the reaction an N-(acyl)-sphingosylphosphoethanolamine = an N-(acyl)-sphingosyl-1,3-cyclic phosphate + ethanolamine. It carries out the reaction a 1-acyl-sn-glycero-3-phosphocholine = a 1-acyl-sn-glycero-2,3-cyclic phosphate + choline. The enzyme catalyses a 1-acyl-sn-glycero-3-phosphoethanolamine = a 1-acyl-sn-glycero-2,3-cyclic phosphate + ethanolamine. Its function is as follows. Dermonecrotic toxins cleave the phosphodiester linkage between the phosphate and headgroup of certain phospholipids (sphingolipid and lysolipid substrates), forming an alcohol (often choline) and a cyclic phosphate. This toxin acts on sphingomyelin (SM). It may also act on ceramide phosphoethanolamine (CPE), lysophosphatidylcholine (LPC) and lysophosphatidylethanolamine (LPE), but not on lysophosphatidylserine (LPS), and lysophosphatidylglycerol (LPG). It acts by transphosphatidylation, releasing exclusively cyclic phosphate products as second products. Induces dermonecrosis, hemolysis, increased vascular permeability, edema, inflammatory response, and platelet aggregation. The sequence is that of Dermonecrotic toxin LdSicTox-alphaIB3av from Loxosceles deserta (Desert recluse spider).